We begin with the raw amino-acid sequence, 286 residues long: MTIKRNLVKTLQSIRYQATTATAHAESTLNPLPNAAIPPKYALVTVRSFPSLEPLTFVPVPTSTVAAPLRRDILWRAVVYENDNRRVGASNPPGRSENGFSRRKLMPQKGSGRARVGDANSPTRHNGGRALARTAPNDYTTELPSKVYSMAFNNALSHQYKSGKLFVIGGEKVDLISPTPELDLNRLDLVNTNTVEGKEIFEGEVIFRKFLEEFQLKGKRLLFITDKTREGLIKSSDPYKQKVDVIQKELVEVNDILRAQAVFIELEALEYLAMAHQKEILHSVSN.

A mitochondrion-targeting transit peptide spans 1–26; that stretch reads MTIKRNLVKTLQSIRYQATTATAHAE. The segment at 85–132 is disordered; sequence RRVGASNPPGRSENGFSRRKLMPQKGSGRARVGDANSPTRHNGGRALA.

This sequence belongs to the universal ribosomal protein uL4 family. As to quaternary structure, component of the mitochondrial large ribosomal subunit (mt-LSU). Mature yeast 74S mitochondrial ribosomes consist of a small (37S) and a large (54S) subunit. The 37S small subunit contains a 15S ribosomal RNA (15S mt-rRNA) and 34 different proteins. The 54S large subunit contains a 21S rRNA (21S mt-rRNA) and 46 different proteins.

It is found in the mitochondrion. Functionally, component of the mitochondrial ribosome (mitoribosome), a dedicated translation machinery responsible for the synthesis of mitochondrial genome-encoded proteins, including at least some of the essential transmembrane subunits of the mitochondrial respiratory chain. The mitoribosomes are attached to the mitochondrial inner membrane and translation products are cotranslationally integrated into the membrane. The polypeptide is Large ribosomal subunit protein uL4m (YML6) (Saccharomyces cerevisiae (strain ATCC 204508 / S288c) (Baker's yeast)).